A 423-amino-acid chain; its full sequence is MEKVDVLLGLQWGDEGKGKIVDVLTPHYDIVARFQGGPNAGHTLEFNGEKYVLRSIPSGIFQGEKTNVIGNGVVLDPLLFKEEAEALARSGHDLTKRLVISRKAHLIMPTHRLLDAANEMAKGSGKIGTTGKGIGPTYTDKVSRNGLRVGDLEHGFEEAYSVAKERHLRILNSLNYPTDKLADLEERWMEATKYLRKFEFVDSEFLINGALLSGKKVLAEGAQGSLLDIDFGSYPFVTSSNTICAGCCTGLGVAPRNVGDVYGIFKAYCTRVGAGPFPTELFDETGDKLCELGREFGSVTGRKRRCGWIDLVALRYTIMLNGVTKLIMMKSDVMDLFPTIKACVAYEIDGKETRNFPFHLTEGVTPVYKELPGWQQSMTNVVSEADFPKEFSDYIAFLEKELGVGIAIVSVGPDREQTIIRQA.

GTP-binding positions include 13-19 (GDEGKGK) and 41-43 (GHT). Residue D14 is the Proton acceptor of the active site. 2 residues coordinate Mg(2+): D14 and G41. Residues 14–17 (DEGK), 39–42 (NAGH), T130, R144, Q223, T238, and R302 contribute to the IMP site. Residue H42 is the Proton donor of the active site. A substrate-binding site is contributed by 298-304 (SVTGRKR). GTP is bound by residues R304 and 410 to 412 (SVG).

The protein belongs to the adenylosuccinate synthetase family. Homodimer. Mg(2+) is required as a cofactor.

It localises to the cytoplasm. The enzyme catalyses IMP + L-aspartate + GTP = N(6)-(1,2-dicarboxyethyl)-AMP + GDP + phosphate + 2 H(+). Its pathway is purine metabolism; AMP biosynthesis via de novo pathway; AMP from IMP: step 1/2. Its function is as follows. Plays an important role in the de novo pathway of purine nucleotide biosynthesis. Catalyzes the first committed step in the biosynthesis of AMP from IMP. The polypeptide is Adenylosuccinate synthetase (Porphyromonas gingivalis (strain ATCC BAA-308 / W83)).